We begin with the raw amino-acid sequence, 429 residues long: Violacein synthase (429 aa).

Residue 3 to 21 participates in FAD binding; that stretch reads RAIIVGGGLAGGLTAIYLA.

It depends on FAD as a cofactor.

It catalyses the reaction protoviolaceinate + NADPH + O2 + H(+) = violaceinate + NADP(+) + H2O. It carries out the reaction protoviolaceinate + NADH + O2 + H(+) = violaceinate + NAD(+) + H2O. The catalysed reaction is protodeoxyviolaceinate + NADPH + O2 + H(+) = deoxyviolaceinate + NADP(+) + H2O. The enzyme catalyses protodeoxyviolaceinate + NADH + O2 + H(+) = deoxyviolaceinate + NAD(+) + H2O. It participates in pigment biosynthesis; violacein biosynthesis. Functionally, catalyzes the hydroxylation of the 16-position of protoviolaceinate and protodeoxyviolaceinate to form violacein and deoxyviolacein, respectively. The chain is Violacein synthase (vioC) from Chromobacterium violaceum (strain ATCC 12472 / DSM 30191 / JCM 1249 / CCUG 213 / NBRC 12614 / NCIMB 9131 / NCTC 9757 / MK).